Here is a 386-residue protein sequence, read N- to C-terminus: Acyl-lipid omega-3 desaturase (cytochrome b5), endoplasmic reticulum (386 aa).

The segment at methionine 1 to alanine 30 is disordered. Residues alanine 17–aspartate 27 are compositionally biased toward basic and acidic residues. The chain crosses the membrane as a helical span at residues isoleucine 63–proline 83. The Histidine box-1 motif lies at histidine 101 to histidine 105. The Histidine box-2 motif lies at histidine 137–histidine 141. 2 helical membrane-spanning segments follow: residues tryptophan 220–leucine 240 and valine 242–histidine 262. Positions histidine 304 to histidine 308 match the Histidine box-3 motif.

Belongs to the fatty acid desaturase type 1 family. Abundant in leaves and seedlings. Barely detectable in root tissue.

Its subcellular location is the endoplasmic reticulum membrane. It carries out the reaction a (9Z,12Z)-octadecadienoyl-containing glycerolipid + 2 Fe(II)-[cytochrome b5] + O2 + 2 H(+) = (9Z,12Z,15Z)-octadecatrienoyl-containing glycerolipid + 2 Fe(III)-[cytochrome b5] + 2 H2O. Its pathway is lipid metabolism; polyunsaturated fatty acid biosynthesis. Its function is as follows. Microsomal (ER) omega-3 fatty acid desaturase introduces the third double bond in the biosynthesis of 18:3 fatty acids, important constituents of plant membranes. It is thought to use cytochrome b5 as an electron donor and to act on fatty acids esterified to phosphatidylcholine and, possibly, other phospholipids. This chain is Acyl-lipid omega-3 desaturase (cytochrome b5), endoplasmic reticulum, found in Arabidopsis thaliana (Mouse-ear cress).